The sequence spans 619 residues: Very-long-chain aldehyde decarbonylase GL1-4 (619 aa).

5 consecutive transmembrane segments (helical) span residues 45–65, 94–114, 126–146, 178–198, and 325–345; these read IAFS…QIWI, GWDD…LAMP, GAVV…YWFH, FAEH…TIYL, and AWYM…AWIY. The Fatty acid hydroxylase domain maps to 138-272; the sequence is VEFLYYWFHR…MPFYDYIYNT (135 aa).

Belongs to the sterol desaturase family. Homodimer. Expressed ubiquitously at low levels, with higher accumulation in developing panicles, shoots and flag leaves.

It localises to the endoplasmic reticulum membrane. The catalysed reaction is a long-chain fatty aldehyde + 2 NADPH + O2 + H(+) = a long-chain alkane + formate + 2 NADP(+) + H2O. Its function is as follows. Aldehyde decarbonylase involved in the conversion of aldehydes to alkanes. Core component of a very-long-chain alkane synthesis complex. In Oryza sativa subsp. japonica (Rice), this protein is Very-long-chain aldehyde decarbonylase GL1-4.